We begin with the raw amino-acid sequence, 590 residues long: Arginine--tRNA ligase (590 aa).

Residues 126-136 carry the 'HIGH' region motif; the sequence is PNVAKEMHVGH.

This sequence belongs to the class-I aminoacyl-tRNA synthetase family. In terms of assembly, monomer.

The protein localises to the cytoplasm. The enzyme catalyses tRNA(Arg) + L-arginine + ATP = L-arginyl-tRNA(Arg) + AMP + diphosphate. The sequence is that of Arginine--tRNA ligase from Streptomyces avermitilis (strain ATCC 31267 / DSM 46492 / JCM 5070 / NBRC 14893 / NCIMB 12804 / NRRL 8165 / MA-4680).